The following is a 95-amino-acid chain: Protein RALF-like 16 (95 aa).

The first 29 residues, 1-29 (MVAYEKSPIVFLFATMMLVMFLFCGSGEA), serve as a signal peptide directing secretion. Disulfide bonds link Cys-45–Cys-53 and Cys-65–Cys-71.

The protein belongs to the plant rapid alkalinization factor (RALF) family.

The protein resides in the secreted. Cell signaling peptide that may regulate plant stress, growth, and development. Mediates a rapid alkalinization of extracellular space by mediating a transient increase in the cytoplasmic Ca(2+) concentration leading to a calcium-dependent signaling events through a cell surface receptor and a concomitant activation of some intracellular mitogen-activated protein kinases. The chain is Protein RALF-like 16 (RALFL16) from Arabidopsis thaliana (Mouse-ear cress).